A 101-amino-acid polypeptide reads, in one-letter code: Urease subunit beta (101 aa).

This sequence belongs to the urease beta subunit family. As to quaternary structure, heterotrimer of UreA (gamma), UreB (beta) and UreC (alpha) subunits. Three heterotrimers associate to form the active enzyme.

It localises to the cytoplasm. It carries out the reaction urea + 2 H2O + H(+) = hydrogencarbonate + 2 NH4(+). The protein operates within nitrogen metabolism; urea degradation; CO(2) and NH(3) from urea (urease route): step 1/1. This Paraburkholderia phytofirmans (strain DSM 17436 / LMG 22146 / PsJN) (Burkholderia phytofirmans) protein is Urease subunit beta.